The chain runs to 473 residues: H(+)/Cl(-) exchange transporter ClcA (473 aa).

Residues Met1–Pro32 are Cytoplasmic-facing. Residues Leu33 to Val69 traverse the membrane as a helical segment. Over His70–Pro76 the chain is Periplasmic. Residues Leu77–Tyr100 form a helical membrane-spanning segment. A Selectivity filter part_1 motif is present at residues Gly106–Pro110. Ser107 contributes to the chloride binding site. An intramembrane region (helical) is located at residues Ile109 to Leu116. Over Glu117–Arg123 the chain is Cytoplasmic. The next 2 helical transmembrane spans lie at Trp124 to Gly141 and Glu148 to Phe166. Residues Gly146–Pro150 carry the Selectivity filter part_2 motif. Topologically, residues Arg167–Thr176 are cytoplasmic. 2 intramembrane regions (helical) span residues Leu177–Ala189 and Pro193–Ile201. The Cytoplasmic segment spans residues Glu202–Ser214. The chain crosses the membrane as a helical span at residues Ile215–Phe232. Residues Asn233–Leu252 lie on the Periplasmic side of the membrane. Residues Trp253–His281 traverse the membrane as a helical segment. Residues Arg282–Asn287 lie on the Cytoplasmic side of the membrane. A helical membrane pass occupies residues Ile288–Ala309. Residues Pro310–Ser329 are Periplasmic-facing. 2 consecutive transmembrane segments (helical) span residues Met330–Ser349 and Gly355–Val376. Residues Gly355–Pro359 carry the Selectivity filter part_3 motif. The chloride site is built by Ile356 and Phe357. The Periplasmic segment spans residues Glu377–Ala386. The segment at residues Gly387–Ser401 is an intramembrane region (helical). Residues Ile402–Ala404 constitute an intramembrane region (note=Loop between two helices). The segment at residues Pro405–Thr416 is an intramembrane region (helical). Positions Asp417–Leu421 form an intramembrane region, note=Loop between two helices. A helical membrane pass occupies residues Ile422–Phe438. Residues Thr439–Thr473 are Cytoplasmic-facing. Tyr445 lines the chloride pocket.

It belongs to the chloride channel (TC 2.A.49) family. ClcA subfamily. In terms of assembly, homodimer.

The protein localises to the cell inner membrane. The enzyme catalyses 2 chloride(in) + H(+)(out) = 2 chloride(out) + H(+)(in). Its function is as follows. Proton-coupled chloride transporter. Functions as antiport system and exchanges two chloride ions for 1 proton. Probably acts as an electrical shunt for an outwardly-directed proton pump that is linked to amino acid decarboxylation, as part of the extreme acid resistance (XAR) response. This chain is H(+)/Cl(-) exchange transporter ClcA, found in Shigella boydii serotype 4 (strain Sb227).